The following is a 585-amino-acid chain: Parathyroid hormone/parathyroid hormone-related peptide receptor (585 aa).

The first 26 residues, 1–26 (MGAARIAPGLALLLCCPVLSSAYALV), serve as a signal peptide directing secretion. Residues 27–184 (DADDVMTKEE…REREVFDRLG (158 aa)) are Extracellular-facing. Cystine bridges form between Cys-48–Cys-113, Cys-104–Cys-144, and Cys-127–Cys-166. Residues 66–100 (DKGWASAPTSGKPRKEKASGKLYPESGEDTGSRHQ) form a disordered region. N-linked (GlcNAc...) asparagine glycans are attached at residues Asn-147, Asn-157, Asn-162, and Asn-172. A helical transmembrane segment spans residues 185-208 (MIYTVGYSVSLASLTVAVLILAYF). At 209-215 (RRLHCTR) the chain is on the cytoplasmic side. The chain crosses the membrane as a helical span at residues 216 to 235 (NYIHMHLFLSFMLRAVSIFV). At 236–277 (KDAVLYSGATLDEAERLTEEELRAIAQAPLPPVAATSYVGCR) the chain is on the extracellular side. A helical membrane pass occupies residues 278 to 301 (VAVTFFLYFLATNYYWILVEGLYL). The Cytoplasmic portion of the chain corresponds to 302–315 (HSLIFMAFFSEKKY). Residues 316 to 337 (LWGFTVFGWGLPAIFVAVWVSV) form a helical membrane-spanning segment. Over 338 to 356 (RATLANTGCWDLSSGNKKW) the chain is Extracellular. Residues 357–377 (IIQVPILASIVLNFILFINIV) traverse the membrane as a helical segment. The Cytoplasmic portion of the chain corresponds to 378–404 (RVLATKLRETNAGRCDTRQQYRKLLKS). A helical membrane pass occupies residues 405-423 (TLVLMPLFGVHYIVFMATP). Residues 424–435 (YTEVSGTLWQVQ) are Extracellular-facing. A helical transmembrane segment spans residues 436–458 (MHYEMLFNSFQGFFVAIIYCFCN). Topologically, residues 459 to 585 (GEVQAEIKKS…LLQEEWETVM (127 aa)) are cytoplasmic. An Important for interaction with G proteins motif is present at residues 469 to 472 (WSRW). Thr-543 carries the post-translational modification Phosphothreonine.

Belongs to the G-protein coupled receptor 2 family. As to quaternary structure, homodimer in the absence of bound ligand. Peptide hormone binding leads to dissociation of the homodimer. In terms of processing, N-glycosylated.

It localises to the cell membrane. In terms of biological role, G-protein-coupled receptor for parathyroid hormone (PTH) and for parathyroid hormone-related peptide (PTHLH). Ligand binding causes a conformation change that triggers signaling via guanine nucleotide-binding proteins (G proteins) and modulates the activity of downstream effectors, such as adenylate cyclase (cAMP). PTH1R is coupled to G(s) G alpha proteins and mediates activation of adenylate cyclase activity. PTHLH dissociates from PTH1R more rapidly than PTH; as consequence, the cAMP response induced by PTHLH decays faster than the response induced by PTH. This chain is Parathyroid hormone/parathyroid hormone-related peptide receptor (PTH1R), found in Sus scrofa (Pig).